The sequence spans 72 residues: uncharacterized protein (72 aa).

The N-terminal stretch at 1 to 17 is a signal peptide; that stretch reads MSLGLAIAVGIVLGVVA.

This is an uncharacterized protein from Schizosaccharomyces pombe (strain 972 / ATCC 24843) (Fission yeast).